A 232-amino-acid chain; its full sequence is Rhamnogalacturonan acetylesterase RhgT (232 aa).

Residue Ser-14 is the Nucleophile of the active site. Residues Glu-191 and His-195 contribute to the active site.

The protein belongs to the 'GDSL' lipolytic enzyme family. As to quaternary structure, monomer.

Its activity is regulated as follows. Almost completely inhibited by diethylpyrocarbonate at 5 mM and completely inhibited by phenylmethylsulfonyl fluoride (PMSF) at 50 mM. Dimethyl phosphite achieves only a 53% inhibition. Also inhibited by metal ions (magnesium, manganese and calcium) and chelating agent (EDTA) at the same level. Functionally, may play a role in the degradation of type I rhamnogalacturonan derived from plant cell walls. This enzyme has a broad substrate specificity, and shows strong preference for glucose pentaacetate, beta-naphthylacetate, and p-nitrophenyl acetate (pNPA). Also active toward acetylated xylan. The protein is Rhamnogalacturonan acetylesterase RhgT (rhgT) of Bacillus subtilis (strain 168).